Consider the following 114-residue polypeptide: T cell receptor beta variable 10-3 (114 aa).

Residues 1-21 form the signal peptide; sequence MGTRLFFYVALCLLWTGHMDA. In terms of domain architecture, Ig-like spans 22–114; sequence GITQSPRHKV…TSVYFCAISE (93 aa). Cysteines 42 and 110 form a disulfide.

Alpha-beta TR is a heterodimer composed of an alpha and beta chain; disulfide-linked. The alpha-beta TR is associated with the transmembrane signaling CD3 coreceptor proteins to form the TR-CD3 (TcR or TCR). The assembly of alpha-beta TR heterodimers with CD3 occurs in the endoplasmic reticulum where a single alpha-beta TR heterodimer associates with one CD3D-CD3E heterodimer, one CD3G-CD3E heterodimer and one CD247 homodimer forming a stable octameric structure. CD3D-CD3E and CD3G-CD3E heterodimers preferentially associate with TR alpha and TR beta chains, respectively. The association of the CD247 homodimer is the last step of TcR assembly in the endoplasmic reticulum and is required for transport to the cell surface.

The protein localises to the cell membrane. V region of the variable domain of T cell receptor (TR) beta chain that participates in the antigen recognition. Alpha-beta T cell receptors are antigen specific receptors which are essential to the immune response and are present on the cell surface of T lymphocytes. Recognize peptide-major histocompatibility (MH) (pMH) complexes that are displayed by antigen presenting cells (APC), a prerequisite for efficient T cell adaptive immunity against pathogens. Binding of alpha-beta TR to pMH complex initiates TR-CD3 clustering on the cell surface and intracellular activation of LCK that phosphorylates the ITAM motifs of CD3G, CD3D, CD3E and CD247 enabling the recruitment of ZAP70. In turn ZAP70 phosphorylates LAT, which recruits numerous signaling molecules to form the LAT signalosome. The LAT signalosome propagates signal branching to three major signaling pathways, the calcium, the mitogen-activated protein kinase (MAPK) kinase and the nuclear factor NF-kappa-B (NF-kB) pathways, leading to the mobilization of transcription factors that are critical for gene expression and essential for T cell growth and differentiation. The T cell repertoire is generated in the thymus, by V-(D)-J rearrangement. This repertoire is then shaped by intrathymic selection events to generate a peripheral T cell pool of self-MH restricted, non-autoaggressive T cells. Post-thymic interaction of alpha-beta TR with the pMH complexes shapes TR structural and functional avidity. The protein is T cell receptor beta variable 10-3 of Homo sapiens (Human).